The sequence spans 478 residues: 2-succinylbenzoate--CoA ligase (478 aa).

This sequence belongs to the ATP-dependent AMP-binding enzyme family. MenE subfamily.

The catalysed reaction is 2-succinylbenzoate + ATP + CoA = 2-succinylbenzoyl-CoA + AMP + diphosphate. It functions in the pathway quinol/quinone metabolism; 1,4-dihydroxy-2-naphthoate biosynthesis; 1,4-dihydroxy-2-naphthoate from chorismate: step 5/7. Its pathway is quinol/quinone metabolism; menaquinone biosynthesis. Functionally, converts 2-succinylbenzoate (OSB) to 2-succinylbenzoyl-CoA (OSB-CoA). This Bacillus licheniformis (strain ATCC 14580 / DSM 13 / JCM 2505 / CCUG 7422 / NBRC 12200 / NCIMB 9375 / NCTC 10341 / NRRL NRS-1264 / Gibson 46) protein is 2-succinylbenzoate--CoA ligase.